Reading from the N-terminus, the 155-residue chain is Interleukin-2 (155 aa).

A signal peptide spans 1 to 20 (MYKIQLLSCIALTLALVANG). Thr-23 carries O-linked (GalNAc...) threonine glycosylation. Cys-79 and Cys-127 are oxidised to a cystine.

It belongs to the IL-2 family.

It is found in the secreted. In terms of biological role, cytokine produced by activated CD4-positive helper T-cells and to a lesser extend activated CD8-positive T-cells and natural killer (NK) cells that plays pivotal roles in the immune response and tolerance. Binds to a receptor complex composed of either the high-affinity trimeric IL-2R (IL2RA/CD25, IL2RB/CD122 and IL2RG/CD132) or the low-affinity dimeric IL-2R (IL2RB and IL2RG). Interaction with the receptor leads to oligomerization and conformation changes in the IL-2R subunits resulting in downstream signaling starting with phosphorylation of JAK1 and JAK3. In turn, JAK1 and JAK3 phosphorylate the receptor to form a docking site leading to the phosphorylation of several substrates including STAT5. This process leads to activation of several pathways including STAT, phosphoinositide-3-kinase/PI3K and mitogen-activated protein kinase/MAPK pathways. Functions as a T-cell growth factor and can increase NK-cell cytolytic activity as well. Promotes strong proliferation of activated B-cells and subsequently immunoglobulin production. Plays a pivotal role in regulating the adaptive immune system by controlling the survival and proliferation of regulatory T-cells, which are required for the maintenance of immune tolerance. Moreover, participates in the differentiation and homeostasis of effector T-cell subsets, including Th1, Th2, Th17 as well as memory CD8-positive T-cells. This Ovis aries (Sheep) protein is Interleukin-2 (IL2).